Reading from the N-terminus, the 119-residue chain is Large ribosomal subunit protein uL22c (119 aa).

Belongs to the universal ribosomal protein uL22 family. As to quaternary structure, part of the 50S ribosomal subunit.

It localises to the plastid. Its subcellular location is the chloroplast. In terms of biological role, this protein binds specifically to 23S rRNA. Its function is as follows. The globular domain of the protein is located near the polypeptide exit tunnel on the outside of the subunit, while an extended beta-hairpin is found that lines the wall of the exit tunnel in the center of the 70S ribosome. This chain is Large ribosomal subunit protein uL22c (rpl22), found in Chaetosphaeridium globosum (Charophycean green alga).